The sequence spans 419 residues: Histone acetyltransferase type B subunit 2 (419 aa).

5 WD repeats span residues 131–171 (PHDG…VEAL), 177–217 (YHTE…KNIK), 225–265 (AHTD…IIHN), 267–307 (NTKK…NPLY), and 311–351 (GHED…AEQT). Residues 353–357 (DEIED) form an interaction with the histone H4 N-terminus region. A WD 6 repeat occupies 368 to 408 (GHKTSINDIAVNPNINWLVASAEEDNIVQIWKCSSNIPRIG).

This sequence belongs to the WD repeat RBAP46/RBAP48/MSI1 family. In terms of assembly, component of the HAT-B complex composed of at least HAT1 and HAT2. The HAT-B complex binds to histone H4 tail.

It is found in the cytoplasm. The protein resides in the nucleus. In terms of biological role, regulatory subunit of the histone acetylase B (HAT-B) complex. The complex acetylates Lys-12 of histone H4 which is required for telomeric silencing. This is Histone acetyltransferase type B subunit 2 (HAT2) from Candida glabrata (strain ATCC 2001 / BCRC 20586 / JCM 3761 / NBRC 0622 / NRRL Y-65 / CBS 138) (Yeast).